The following is a 359-amino-acid chain: Small ribosomal subunit protein mS22 (359 aa).

Belongs to the mitochondrion-specific ribosomal protein mS22 family. As to quaternary structure, component of the mitochondrial ribosome small subunit (28S) which comprises a 12S rRNA and about 30 distinct proteins.

Its subcellular location is the mitochondrion. In Bos taurus (Bovine), this protein is Small ribosomal subunit protein mS22 (MRPS22).